We begin with the raw amino-acid sequence, 504 residues long: Acid phosphatase A (504 aa).

An N-terminal signal peptide occupies residues 1 to 22 (MYTLLDILKGLPLLAVAAIASA). N-linked (GlcNAc...) asparagine glycosylation is found at Asn-84, Asn-112, Asn-168, Asn-260, Asn-415, Asn-450, and Asn-474.

The protein belongs to the metallophosphoesterase superfamily. Purple acid phosphatase family. Monomer.

It is found in the secreted. The catalysed reaction is a phosphate monoester + H2O = an alcohol + phosphate. In terms of biological role, acid phosphatase involved in the regulation of fungal phenotypic traits and virulence in C.parasitica. The polypeptide is Acid phosphatase A (Cryphonectria parasitica (strain ATCC 38755 / EP155)).